A 187-amino-acid polypeptide reads, in one-letter code: Peptidyl-tRNA hydrolase (187 aa).

Residue Phe-14 coordinates tRNA. The active-site Proton acceptor is the His-19. Positions 64, 66, and 112 each coordinate tRNA.

It belongs to the PTH family. In terms of assembly, monomer.

Its subcellular location is the cytoplasm. It catalyses the reaction an N-acyl-L-alpha-aminoacyl-tRNA + H2O = an N-acyl-L-amino acid + a tRNA + H(+). In terms of biological role, hydrolyzes ribosome-free peptidyl-tRNAs (with 1 or more amino acids incorporated), which drop off the ribosome during protein synthesis, or as a result of ribosome stalling. Functionally, catalyzes the release of premature peptidyl moieties from peptidyl-tRNA molecules trapped in stalled 50S ribosomal subunits, and thus maintains levels of free tRNAs and 50S ribosomes. This Oceanobacillus iheyensis (strain DSM 14371 / CIP 107618 / JCM 11309 / KCTC 3954 / HTE831) protein is Peptidyl-tRNA hydrolase.